The chain runs to 309 residues: Calcium homeostasis modulator protein 5 (309 aa).

At 1–15 the chain is on the cytoplasmic side; it reads MDAFQSILKFFLNQK. A helical membrane pass occupies residues 16-37; that stretch reads TAIGYSFMALLTVGSERLFSLV. Arg32 and Val37 together coordinate a 1,2-diacyl-sn-glycero-3-phosphate. Topologically, residues 38–45 are extracellular; it reads AFKCPCSV. Cystine bridges form between Cys41-Cys127, Cys43-Cys158, and Cys142-Cys149. A helical transmembrane segment spans residues 46–70; the sequence is ENTAYGLVFLFAPAWVLLILGFFLN. Topologically, residues 71–99 are cytoplasmic; sequence NKAWRLFTGCCMNPKKIFPRRRCCRFFYV. Residues 100–129 traverse the membrane as a helical segment; that stretch reads LGHIILSSLVAPVMWLSVALLNGTFYECAM. Asn121 serves as a coordination point for a 1,2-diacyl-sn-glycero-3-phosphate. At 130-174 the chain is on the extracellular side; sequence SGTRSTRLLEMICKGKPKECWEELHKVSCGKSSMAAMESEEVRLS. A helical membrane pass occupies residues 175–200; sequence LQAQSQILGWCLICSASFLSLLTTCY. Residues 201–309 lie on the Cytoplasmic side of the membrane; that stretch reads ARCRSKVSYL…MILVGTAQSL (109 aa). Arg202 provides a ligand contact to a 1,2-diacyl-sn-glycero-3-phosphate.

It belongs to the CALHM family. Oligomerizes to form undecameric cone-shaped channels.

It is found in the membrane. In terms of biological role, may assemble to form large pore channels with gating and ion conductance likely regulated by membrane lipids. This chain is Calcium homeostasis modulator protein 5, found in Mus musculus (Mouse).